The chain runs to 144 residues: 3-hydroxyacyl-[acyl-carrier-protein] dehydratase FabZ (144 aa).

H51 is a catalytic residue.

This sequence belongs to the thioester dehydratase family. FabZ subfamily.

The protein resides in the cytoplasm. The enzyme catalyses a (3R)-hydroxyacyl-[ACP] = a (2E)-enoyl-[ACP] + H2O. Functionally, involved in unsaturated fatty acids biosynthesis. Catalyzes the dehydration of short chain beta-hydroxyacyl-ACPs and long chain saturated and unsaturated beta-hydroxyacyl-ACPs. The protein is 3-hydroxyacyl-[acyl-carrier-protein] dehydratase FabZ of Clostridium botulinum (strain 657 / Type Ba4).